The following is a 58-amino-acid chain: Large ribosomal subunit protein uL30 (58 aa).

Belongs to the universal ribosomal protein uL30 family. Part of the 50S ribosomal subunit.

This Vibrio campbellii (strain ATCC BAA-1116) protein is Large ribosomal subunit protein uL30.